We begin with the raw amino-acid sequence, 105 residues long: Large ribosomal subunit protein eL42 (105 aa).

The tract at residues 23–61 (KVTQYKKGKESKFAQGRRRYDRKQSGFGGQTKPIFRKKA) is disordered.

Belongs to the eukaryotic ribosomal protein eL42 family.

This chain is Large ribosomal subunit protein eL42, found in Caenorhabditis elegans.